The sequence spans 342 residues: Anthranilate phosphoribosyltransferase (342 aa).

5-phospho-alpha-D-ribose 1-diphosphate is bound by residues Gly83, 86-87 (GD), Thr91, 93-96 (NIST), 111-119 (KHGGRSVSS), and Ser123. Gly83 is an anthranilate binding site. Residue Ser95 participates in Mg(2+) binding. Arg169 contributes to the anthranilate binding site. Mg(2+) is bound by residues Asp228 and Glu229.

Belongs to the anthranilate phosphoribosyltransferase family. As to quaternary structure, homodimer. Requires Mg(2+) as cofactor.

It carries out the reaction N-(5-phospho-beta-D-ribosyl)anthranilate + diphosphate = 5-phospho-alpha-D-ribose 1-diphosphate + anthranilate. The protein operates within amino-acid biosynthesis; L-tryptophan biosynthesis; L-tryptophan from chorismate: step 2/5. In terms of biological role, catalyzes the transfer of the phosphoribosyl group of 5-phosphorylribose-1-pyrophosphate (PRPP) to anthranilate to yield N-(5'-phosphoribosyl)-anthranilate (PRA). The protein is Anthranilate phosphoribosyltransferase of Chromobacterium violaceum (strain ATCC 12472 / DSM 30191 / JCM 1249 / CCUG 213 / NBRC 12614 / NCIMB 9131 / NCTC 9757 / MK).